The chain runs to 620 residues: Chaperone protein HscA homolog (620 aa).

It belongs to the heat shock protein 70 family.

In terms of biological role, chaperone involved in the maturation of iron-sulfur cluster-containing proteins. Has a low intrinsic ATPase activity which is markedly stimulated by HscB. This is Chaperone protein HscA homolog from Shewanella sediminis (strain HAW-EB3).